The following is a 367-amino-acid chain: Ferrochelatase (367 aa).

Histidine 226 and glutamate 307 together coordinate Fe cation.

It belongs to the ferrochelatase family.

Its subcellular location is the cytoplasm. The catalysed reaction is heme b + 2 H(+) = protoporphyrin IX + Fe(2+). Its pathway is porphyrin-containing compound metabolism; protoheme biosynthesis; protoheme from protoporphyrin-IX: step 1/1. In terms of biological role, catalyzes the ferrous insertion into protoporphyrin IX. This is Ferrochelatase from Burkholderia mallei (strain NCTC 10247).